A 396-amino-acid polypeptide reads, in one-letter code: Beta-1,4-galactosyltransferase 3 (396 aa).

The Cytoplasmic segment spans residues 1–10 (MLRRLLERPC). A helical; Signal-anchor for type II membrane protein transmembrane segment spans residues 11–31 (TLALLVGSQLAVMMYLSLGGF). At 32–396 (RSLSALFGRE…ANHTAPHGSH (365 aa)) the chain is on the lumenal side. N-linked (GlcNAc...) asparagine glycosylation is present at Asn-57. The cysteines at positions 80 and 122 are disulfide-linked. Residue 133-137 (PHRAR) participates in UDP-alpha-D-galactose binding. An N-linked (GlcNAc...) asparagine glycan is attached at Asn-169. Residues 172 to 174 (FNR), 199 to 200 (VD), Tyr-229, and Trp-261 contribute to the UDP-alpha-D-galactose site. Cys-193 and Cys-212 are joined by a disulfide. Asp-200 serves as a coordination point for Mn(2+). Residue 263-266 (GEDD) coordinates N-acetyl-D-glucosamine. His-294 serves as a coordination point for Mn(2+). 294-296 (HRG) is a UDP-alpha-D-galactose binding site. Arg-306 contacts N-acetyl-D-glucosamine. N-linked (GlcNAc...) asparagine glycosylation occurs at Asn-340. The tract at residues 341–396 (ITADIGTDPRGPRTSSGPHYPPGSSQAFRQEMLQRRPPARPGPLPTANHTAPHGSH) is disordered. The segment covering 353–368 (RTSSGPHYPPGSSQAF) has biased composition (polar residues). Asn-388 carries N-linked (GlcNAc...) asparagine glycosylation.

The protein belongs to the glycosyltransferase 7 family. The cofactor is Mn(2+).

It is found in the golgi apparatus. It localises to the golgi stack membrane. The catalysed reaction is an N-acetyl-beta-D-glucosaminyl derivative + UDP-alpha-D-galactose = a beta-D-galactosyl-(1-&gt;4)-N-acetyl-beta-D-glucosaminyl derivative + UDP + H(+). The enzyme catalyses N-acetyl-D-glucosamine + UDP-alpha-D-galactose = beta-D-galactosyl-(1-&gt;4)-N-acetyl-D-glucosamine + UDP + H(+). It catalyses the reaction a beta-D-GlcNAc-(1-&gt;3)-beta-D-Gal-(1-&gt;4)-beta-D-Glc-(1&lt;-&gt;1)-Cer(d18:1(4E)) + UDP-alpha-D-galactose = a neolactoside nLc4Cer(d18:1(4E)) + UDP + H(+). It carries out the reaction a beta-D-glucosylceramide + UDP-alpha-D-galactose = a beta-D-galactosyl-(1-&gt;4)-beta-D-glucosyl-(1&lt;-&gt;1)-ceramide + UDP + H(+). The catalysed reaction is a neolactoside IV(3)-beta-GlcNAc-nLc4Cer + UDP-alpha-D-galactose = a neolactoside nLc6Cer + UDP + H(+). Its pathway is protein modification; protein glycosylation. Functionally, responsible for the synthesis of complex-type N-linked oligosaccharides in many glycoproteins as well as the carbohydrate moieties of glycolipids. This is Beta-1,4-galactosyltransferase 3 (B4GALT3) from Bos taurus (Bovine).